The following is a 664-amino-acid chain: CRISPR-associated DNA-binding protein Cas12m (664 aa).

The recognition domain (REC1-N) stretch occupies residues 1–137; it reads MKRVTITIDG…AKYRELIGSD (137 aa). A recognition domain (REC2) region spans residues 138-212; that stretch reads EETAQMDTEI…AAKDRIRAAG (75 aa). The interval 213–270 is recognition domain (REC1-C); that stretch reads NDIENLEKDRQAAVIKAYNNSGLWWGNYNAVLESYKKARIKALKDGAELKYHRFDGSG. The wedge domain (WED) stretch occupies residues 271–390; the sequence is RFTNQIQGGM…VWSVVFTFTT (120 aa). Residues 391–404 are linker; that stretch reads DCPTYDQRSSTGNR. Residues 405 to 618 are ruvC-I; that stretch reads CGLNLGWKKQ…KNGTQIEQVS (214 aa). The target nucleic-acid binding (TNB) stretch occupies residues 618–650; sequence STASSATCSACKGKMEQVDGIMWRCRECRALVD. Residues cysteine 625, cysteine 628, cysteine 642, and cysteine 645 each coordinate Zn(2+). A ruvC-II region spans residues 651–664; that stretch reads QDINAAANLFREVL. Aspartate 652 contacts Mg(2+).

The protein belongs to the CRISPR-associated DNA-binding protein Cas12m family. Mg(2+) is required as a cofactor. Zn(2+) serves as cofactor.

Its function is as follows. CRISPR (clustered regularly interspaced short palindromic repeat), is an adaptive immune system that provides protection against mobile genetic elements (viruses, transposable elements and conjugative plasmids). CRISPR clusters contain sequences complementary to antecedent mobile elements and target invading nucleic acids. CRISPR clusters are transcribed and processed into CRISPR RNA (crRNA). Recognizes a short motif in the CRISPR repeat sequences (the 5' PAM or protospacer adjacent motif, 5'-CCN-3' in this organism) to help distinguish self versus nonself, as targets within the bacterial CRISPR locus do not have PAMs. Cas12m-crRNA binds DNA in a PAM-dependent, crRNA-guided fashion. DNA-binding probably inhibits transcription, leading to gene silencing. Upon expression in E.coli as a CRISPR region preferentially binds to its associated crRNA. Probably required for pre-crRNA processing to mature crRNA. The sequence is that of CRISPR-associated DNA-binding protein Cas12m from Pelobacter propionicus (strain DSM 2379 / NBRC 103807 / OttBd1).